We begin with the raw amino-acid sequence, 206 residues long: MEKLTKRQQDILDFIKLKVQEKGYPPSVREIGQAVGLASSSTVHGHLSRLEEKGYIRRDPTKPRAIEILGEDRMDTETQSVIQVPIVGKVTAGLPITAVESVEEHFPLPASIVAGADQVFMLRISGDSMIEAGIFDGDLVVVRQQQSAYNGEIVVALTEDNEATVKRFYKEKDHFRLQPENSSLEPIILKQVSVIGKVIGVYRDLH.

Residues 28–48 (VREIGQAVGLASSSTVHGHLS) constitute a DNA-binding region (H-T-H motif). Residues Ser128 and Lys166 each act as for autocatalytic cleavage activity in the active site.

This sequence belongs to the peptidase S24 family. Homodimer.

It catalyses the reaction Hydrolysis of Ala-|-Gly bond in repressor LexA.. Represses a number of genes involved in the response to DNA damage (SOS response), including recA and lexA. In the presence of single-stranded DNA, RecA interacts with LexA causing an autocatalytic cleavage which disrupts the DNA-binding part of LexA, leading to derepression of the SOS regulon and eventually DNA repair. This Bacillus thuringiensis (strain Al Hakam) protein is LexA repressor.